The sequence spans 406 residues: Probable 2,3-bisphosphoglycerate-independent phosphoglycerate mutase (406 aa).

It belongs to the BPG-independent phosphoglycerate mutase family. A-PGAM subfamily.

The enzyme catalyses (2R)-2-phosphoglycerate = (2R)-3-phosphoglycerate. The protein operates within carbohydrate degradation; glycolysis; pyruvate from D-glyceraldehyde 3-phosphate: step 3/5. Its function is as follows. Catalyzes the interconversion of 2-phosphoglycerate and 3-phosphoglycerate. In Thermus thermophilus (strain ATCC 27634 / DSM 579 / HB8), this protein is Probable 2,3-bisphosphoglycerate-independent phosphoglycerate mutase.